We begin with the raw amino-acid sequence, 147 residues long: MVHWTAEEKAAITSVWQKVNVEHDGHDALGRLLIVYPWTQRYFSNFGNLSNSAAVAGNAKVQAHGKKVLSAVGNAISHIDSVKSSLQQLSKIHATELFVDPENFKRFGGVLVIVLGAKLGTAFTPKVQAAWEKFIAVLVDGLSQGYN.

In terms of domain architecture, Globin spans 3–147 (HWTAEEKAAI…LVDGLSQGYN (145 aa)). His-64 and His-93 together coordinate heme b.

The protein belongs to the globin family. As to quaternary structure, heterotetramer of two alpha chains and two beta chains. Red blood cells.

Functionally, involved in oxygen transport from the lung to the various peripheral tissues. The polypeptide is Hemoglobin subunit beta-2 (hbb2) (Xenopus laevis (African clawed frog)).